Consider the following 168-residue polypeptide: Endoribonuclease YbeY (168 aa).

Residues histidine 132, histidine 136, and histidine 142 each coordinate Zn(2+).

This sequence belongs to the endoribonuclease YbeY family. The cofactor is Zn(2+).

The protein resides in the cytoplasm. In terms of biological role, single strand-specific metallo-endoribonuclease involved in late-stage 70S ribosome quality control and in maturation of the 3' terminus of the 16S rRNA. The chain is Endoribonuclease YbeY from Clostridium perfringens (strain SM101 / Type A).